A 193-amino-acid polypeptide reads, in one-letter code: MSTSSGADSSPPVSGLDYDDTALTLALPGSSSSSSSTADPERKRAAHADHADAKPPSPKARAVGWPPVRAYRRNALREDSARAKLVKVAVDGAPYLRKVDLAAHAGYAPLLRALHGMFASCLAVRGGGGGDGEGTKLVDLVTGAEYVPTYEDKDGDWMLVGDVPWKMFVESCKRIRLMKSSEAVNLSPRRSSR.

A compositionally biased stretch (polar residues) spans 1-12 (MSTSSGADSSPP). The segment at 1-66 (MSTSSGADSS…SPKARAVGWP (66 aa)) is disordered. The segment covering 21–36 (TALTLALPGSSSSSSS) has biased composition (low complexity). Positions 23–27 (LTLAL) match the EAR-like (transcriptional repression) motif. Basic and acidic residues predominate over residues 39-53 (DPERKRAAHADHADA). The PB1 domain maps to 83-191 (AKLVKVAVDG…EAVNLSPRRS (109 aa)).

It belongs to the Aux/IAA family. As to quaternary structure, homodimers and heterodimers. Highly expressed in roots. Expressed in seedlings.

The protein resides in the nucleus. In terms of biological role, aux/IAA proteins are short-lived transcriptional factors that function as repressors of early auxin response genes at low auxin concentrations. The chain is Auxin-responsive protein IAA23 (IAA23) from Oryza sativa subsp. japonica (Rice).